Here is a 46-residue protein sequence, read N- to C-terminus: Iota-conotoxin-like Fi11.8 (46 aa).

P2 and P11 each carry 4-hydroxyproline. Disulfide bonds link C5-C19, C12-C22, C18-C27, and C21-C38. Position 29 is a 4-hydroxyproline (P29). 6'-bromotryptophan is present on W33. At F44 the chain carries D-phenylalanine.

This sequence belongs to the conotoxin I1 superfamily. In terms of tissue distribution, expressed by the venom duct.

The protein resides in the secreted. In terms of biological role, iota-conotoxins bind to voltage-gated sodium channels (Nav) and act as agonists by shifting the voltage-dependence of activation to more hyperpolarized levels. Produces general excitatory symptoms. The sequence is that of Iota-conotoxin-like Fi11.8 from Conus figulinus (Fig cone).